The sequence spans 544 residues: Glucose starvation modulator protein 1 (544 aa).

Positions 20–48 (CVFCHSKHLQCSNERPCKNCMKRNLGDQC) form a DNA-binding region, zn(2)-C6 fungal-type. A disordered region spans residues 65–93 (KKMKSRTNSISSSYRSPSVSESPQNPYTH). Positions 70 to 86 (RTNSISSSYRSPSVSES) are enriched in low complexity. One can recognise a PAS domain in the interval 403-475 (SLIDYEKLLL…FKLFKSVAVG (73 aa)).

This sequence belongs to the ERT1/acuK family.

The protein resides in the nucleus. Its function is as follows. Transcription factor which regulates nonfermentable carbon utilization. The polypeptide is Glucose starvation modulator protein 1 (GSM1) (Debaryomyces hansenii (strain ATCC 36239 / CBS 767 / BCRC 21394 / JCM 1990 / NBRC 0083 / IGC 2968) (Yeast)).